Here is a 167-residue protein sequence, read N- to C-terminus: Small ribosomal subunit protein uS5 (167 aa).

One can recognise an S5 DRBM domain in the interval 12–75; sequence LEDQVVSINR…DAAKKSLIEV (64 aa).

Belongs to the universal ribosomal protein uS5 family. Part of the 30S ribosomal subunit. Contacts proteins S4 and S8.

With S4 and S12 plays an important role in translational accuracy. Its function is as follows. Located at the back of the 30S subunit body where it stabilizes the conformation of the head with respect to the body. This Lacticaseibacillus paracasei (strain ATCC 334 / BCRC 17002 / CCUG 31169 / CIP 107868 / KCTC 3260 / NRRL B-441) (Lactobacillus paracasei) protein is Small ribosomal subunit protein uS5.